The sequence spans 407 residues: Large ribosomal subunit protein uL3-like (407 aa).

Positions 1–31 (MSHRKFSAPRHGHLGFLPHKRSHRHRGKVKT) are enriched in basic residues. Disordered stretches follow at residues 1–35 (MSHR…WPRD) and 383–407 (QEKR…SGDL). The segment covering 394 to 407 (KHLEKEKPETSGDL) has biased composition (basic and acidic residues).

It belongs to the universal ribosomal protein uL3 family. As to quaternary structure, component of the large ribosomal subunit in striated muscle cells.

Functionally, heart- and skeletal muscle-specific component of the ribosome, which regulates muscle function. Component of the large ribosomal subunit in striated muscle cells: replaces the RPL3 paralog in the ribosome in these cells. The ribosome is a large ribonucleoprotein complex responsible for the synthesis of proteins in the cell. Inhibits myotube growth and muscle function. The protein is Large ribosomal subunit protein uL3-like (RPL3L) of Bos taurus (Bovine).